Consider the following 261-residue polypeptide: ATP synthase subunit a (261 aa).

7 consecutive transmembrane segments (helical) span residues 31 to 51 (IAFT…LIFM), 64 to 84 (WQAA…TNIG), 97 to 117 (LFMF…VVGV), 126 to 146 (LTVT…VGFW), 166 to 188 (IPMI…GLRL), 201 to 223 (VLAG…VSIP), and 235 to 255 (ELLV…LYLN).

Belongs to the ATPase A chain family. As to quaternary structure, F-type ATPases have 2 components, CF(1) - the catalytic core - and CF(0) - the membrane proton channel. CF(1) has five subunits: alpha(3), beta(3), gamma(1), delta(1), epsilon(1). CF(0) has three main subunits: a(1), b(2) and c(9-12). The alpha and beta chains form an alternating ring which encloses part of the gamma chain. CF(1) is attached to CF(0) by a central stalk formed by the gamma and epsilon chains, while a peripheral stalk is formed by the delta and b chains.

Its subcellular location is the cell inner membrane. Key component of the proton channel; it plays a direct role in the translocation of protons across the membrane. This is ATP synthase subunit a from Rhizorhabdus wittichii (strain DSM 6014 / CCUG 31198 / JCM 15750 / NBRC 105917 / EY 4224 / RW1) (Sphingomonas wittichii).